A 342-amino-acid polypeptide reads, in one-letter code: Succinylglutamate desuccinylase (342 aa).

Zn(2+) contacts are provided by His64, Glu67, and His159. Glu222 is an active-site residue.

It belongs to the AspA/AstE family. Succinylglutamate desuccinylase subfamily. Zn(2+) is required as a cofactor.

It catalyses the reaction N-succinyl-L-glutamate + H2O = L-glutamate + succinate. It participates in amino-acid degradation; L-arginine degradation via AST pathway; L-glutamate and succinate from L-arginine: step 5/5. Transforms N(2)-succinylglutamate into succinate and glutamate. In Burkholderia orbicola (strain MC0-3), this protein is Succinylglutamate desuccinylase.